A 492-amino-acid chain; its full sequence is Glutamyl-tRNA(Gln) amidotransferase subunit A (492 aa).

Active-site charge relay system residues include Lys-78 and Ser-158. The active-site Acyl-ester intermediate is Ser-182.

This sequence belongs to the amidase family. GatA subfamily. Heterotrimer of A, B and C subunits.

The enzyme catalyses L-glutamyl-tRNA(Gln) + L-glutamine + ATP + H2O = L-glutaminyl-tRNA(Gln) + L-glutamate + ADP + phosphate + H(+). Functionally, allows the formation of correctly charged Gln-tRNA(Gln) through the transamidation of misacylated Glu-tRNA(Gln) in organisms which lack glutaminyl-tRNA synthetase. The reaction takes place in the presence of glutamine and ATP through an activated gamma-phospho-Glu-tRNA(Gln). The chain is Glutamyl-tRNA(Gln) amidotransferase subunit A from Rhodopseudomonas palustris (strain HaA2).